The following is a 120-amino-acid chain: Large ribosomal subunit protein uL22 (120 aa).

This sequence belongs to the universal ribosomal protein uL22 family. In terms of assembly, part of the 50S ribosomal subunit.

This protein binds specifically to 23S rRNA; its binding is stimulated by other ribosomal proteins, e.g. L4, L17, and L20. It is important during the early stages of 50S assembly. It makes multiple contacts with different domains of the 23S rRNA in the assembled 50S subunit and ribosome. In terms of biological role, the globular domain of the protein is located near the polypeptide exit tunnel on the outside of the subunit, while an extended beta-hairpin is found that lines the wall of the exit tunnel in the center of the 70S ribosome. The chain is Large ribosomal subunit protein uL22 from Corynebacterium glutamicum (strain R).